The following is an 873-amino-acid chain: F-BAR domain only protein 1 (873 aa).

In terms of domain architecture, F-BAR spans 1–248 (MSYFGEHFWG…NVENVTVDML (248 aa)). Positions 1–275 (MSYFGEHFWG…LDFDAYSSAA (275 aa)) are mediates membrane-binding. Residues 153 to 172 (RENTSQKEMDKAETKSKKAA) are disordered. Residues 155–178 (NTSQKEMDKAETKSKKAADSLRRS) are a coiled coil. The tract at residues 267–439 (DFDAYSSAAL…KSLFGPPLES (173 aa)) is mediates interaction with the adaptor protein complex AP-2. Ser295, Ser343, and Ser368 each carry phosphoserine. Residues 302–347 (SVDFLESDSGVPPEVDDEGFTVRPDISQNNGAEPPRFSSSDSDFDD) are disordered. Disordered regions lie at residues 381–600 (GSLI…RGPS) and 813–833 (SGHL…SPVA). Low complexity predominate over residues 447–466 (TGSSSLGFTSSPSPFSSSSP). Ser518 is modified (phosphoserine). Positions 567-576 (SLSPSPLGSS) are enriched in low complexity. The mediates interaction with AGFG1, CALM, DAB2, EPS15, EPS15R, ITSN1 and clathrin stretch occupies residues 593–873 (HGISRGPSPV…FATGMYLVSC (281 aa)). Position 600 is a phosphoserine (Ser600). Residues 609–872 (ALPVATAFTE…RFATGMYLVS (264 aa)) enclose the MHD domain. The span at 816–827 (LSASWQPQSGPS) shows a compositional bias: polar residues.

It belongs to the FCHO family. As to quaternary structure, may oligomerize and form homotetramer. Interacts with AP2A2 and AP2B1; 2 subunits of the adaptor protein complex AP-2. Interacts with DAB2. Interacts with clathrin (CLTC or CLTCL1). Interacts with EPS15, EPS15R and ITSN1. Interacts with AGFG1 and CALM. May interact with ACVR1; linking this receptor to clathrin-mediated endocytosis. As to expression, mainly detected in brain and spleen.

It localises to the membrane. It is found in the clathrin-coated pit. Its function is as follows. Functions in an early step of clathrin-mediated endocytosis. Has both a membrane binding/bending activity and the ability to recruit proteins essential to the formation of functional clathrin-coated pits. May regulate Bmp signaling by regulating clathrin-mediated endocytosis of Bmp receptors. Involved in the regulation of T-cell poliferation and activation. Affects TCR clustering upon receptor triggering and modulates its internalisation, playing a role in TCR-dependent T-cell activation. The polypeptide is F-BAR domain only protein 1 (Mus musculus (Mouse)).